Reading from the N-terminus, the 252-residue chain is Triosephosphate isomerase (252 aa).

Substrate is bound at residue 10 to 12; that stretch reads NWK. Histidine 96 (electrophile) is an active-site residue. Catalysis depends on glutamate 168, which acts as the Proton acceptor. Substrate-binding positions include glycine 174, serine 214, and 235–236; that span reads GG.

Belongs to the triosephosphate isomerase family. As to quaternary structure, homodimer.

It localises to the cytoplasm. It carries out the reaction D-glyceraldehyde 3-phosphate = dihydroxyacetone phosphate. It functions in the pathway carbohydrate biosynthesis; gluconeogenesis. The protein operates within carbohydrate degradation; glycolysis; D-glyceraldehyde 3-phosphate from glycerone phosphate: step 1/1. Involved in the gluconeogenesis. Catalyzes stereospecifically the conversion of dihydroxyacetone phosphate (DHAP) to D-glyceraldehyde-3-phosphate (G3P). The protein is Triosephosphate isomerase of Lactococcus lactis subsp. lactis (strain IL1403) (Streptococcus lactis).